A 352-amino-acid polypeptide reads, in one-letter code: C-C chemokine receptor type 5 (352 aa).

The Extracellular segment spans residues 1–30; sequence MDYQVSSPTYDIDYYTSEPCQKVNVKQIAA. The residue at position 3 (Tyr-3) is a Sulfotyrosine. Ser-6 and Ser-7 each carry an O-linked (GalNAc...) serine glycan. Residues Tyr-10, Tyr-14, and Tyr-15 each carry the sulfotyrosine modification. Disulfide bonds link Cys-20–Cys-269 and Cys-101–Cys-178. The helical transmembrane segment at 31–58 threads the bilayer; sequence RLLPPLYSLVFIFGFVGNILVVLILINC. Residues 59–68 are Cytoplasmic-facing; sequence KRLKSMTDIY. A helical transmembrane segment spans residues 69–89; it reads LLNLAISDLFFLLTVPFWAHY. Topologically, residues 90–102 are extracellular; the sequence is AAAQWDFGNTMCQ. Residues 103–124 form a helical membrane-spanning segment; that stretch reads LLTGLYFIGFFSGIFFIILLTI. At 125-141 the chain is on the cytoplasmic side; it reads DRYLAIVHAVFALKART. A helical transmembrane segment spans residues 142–166; it reads VTFGVVTSVITWVVAVFASLPGIIF. Over 167–198 the chain is Extracellular; sequence TRSQREGVHYTCSSHFPYSQYQFWKNFQTLKI. Residues 199-218 form a helical membrane-spanning segment; it reads VILGLVLPLLVMVICYSGIL. The Cytoplasmic portion of the chain corresponds to 219 to 235; sequence KTLLRCRNEKKRHRAVR. The chain crosses the membrane as a helical span at residues 236-260; it reads LIFTIMIVYFLFWAPYNIVLLLNTF. At 261–277 the chain is on the extracellular side; the sequence is QEFFGLNNCSSSNRLDQ. A helical membrane pass occupies residues 278–301; the sequence is AMQVTETLGMTHCCINPIIYAFVG. The Cytoplasmic portion of the chain corresponds to 302 to 352; the sequence is EKFRNYLLVFFQKHIAKRFCKCCSIFQQEAPERASSVYTRSTGEQETSVGL. Residues Cys-321, Cys-323, and Cys-324 are each lipidated (S-palmitoyl cysteine). 4 positions are modified to phosphoserine; by BARK1: Ser-336, Ser-337, Ser-342, and Ser-349.

Belongs to the G-protein coupled receptor 1 family. As to quaternary structure, interacts with PRAF2. Efficient ligand binding to CCL3/MIP-1alpha and CCL4/MIP-1beta requires sulfation, O-glycosylation and sialic acid modifications. Glycosylation on Ser-6 is required for efficient binding of CCL4. Interacts with GRK2. Interacts with ARRB1 and ARRB2. Interacts with CNIH4. Interacts with S100A4; this interaction stimulates T-lymphocyte chemotaxis. Post-translationally, sulfated on at least 2 of the N-terminal tyrosines. Sulfation is required for efficient binding of the chemokines, CCL3 and CCL4. Palmitoylation in the C-terminal is important for cell surface expression. In terms of processing, phosphorylation on serine residues in the C-terminal is stimulated by binding CC chemokines especially by APO-RANTES. Post-translationally, O-glycosylated, but not N-glycosylated. Ser-6 appears to be the major site even if Ser-7 may be also O-glycosylated. Also sialylated glycans present which contribute to chemokine binding. Thr-16 and Ser-17 may also be glycosylated and, if so, with small moieties such as a T-antigen.

It localises to the cell membrane. Its function is as follows. Receptor for a number of inflammatory CC-chemokines including CCL3/MIP-1-alpha, CCL4/MIP-1-beta and RANTES and subsequently transduces a signal by increasing the intracellular calcium ion level. May play a role in the control of granulocytic lineage proliferation or differentiation. Participates in T-lymphocyte migration to the infection site by acting as a chemotactic receptor. The chain is C-C chemokine receptor type 5 (CCR5) from Rhinopithecus avunculus (Tonkin snub-nosed monkey).